The primary structure comprises 323 residues: Delta(7)-sterol 5(6)-desaturase ERG3B (323 aa).

3 helical membrane passes run 67 to 87 (ASILMIAGFGAAFIYVISAAL), 112 to 132 (IQSSFFAIPIIDLLTLPFFLG), and 150 to 170 (SWLAISTILYMVFNDLGIYWI). Residues 157–285 (ILYMVFNDLG…YFTWADNYWG (129 aa)) form the Fatty acid hydroxylase domain. Positions 171 to 175 (HRLEH) match the Histidine box-1 motif. The short motif at 184–188 (HKPHH) is the Histidine box-2 element. A Histidine box-3 motif is present at residues 262-266 (HTLHH).

The protein belongs to the sterol desaturase family.

The protein localises to the endoplasmic reticulum membrane. It carries out the reaction episterol + 2 Fe(II)-[cytochrome b5] + O2 + 2 H(+) = 5-dehydroepisterol + 2 Fe(III)-[cytochrome b5] + 2 H2O. It participates in steroid metabolism; ergosterol biosynthesis. In terms of biological role, C-5 sterol desaturase; part of the third module of ergosterol biosynthesis pathway that includes the late steps of the pathway. ERG3A and ERG3BB catalyze the introduction of a C-5 double bond in the B ring to produce 5-dehydroepisterol. The third module or late pathway involves the ergosterol synthesis itself through consecutive reactions that mainly occur in the endoplasmic reticulum (ER) membrane. Firstly, the squalene synthase ERG9 catalyzes the condensation of 2 farnesyl pyrophosphate moieties to form squalene, which is the precursor of all steroids. Squalene synthase is crucial for balancing the incorporation of farnesyl diphosphate (FPP) into sterol and nonsterol isoprene synthesis. Secondly, squalene is converted into lanosterol by the consecutive action of the squalene epoxidase ERG1 and the lanosterol synthase ERG7. Then, the delta(24)-sterol C-methyltransferase ERG6 methylates lanosterol at C-24 to produce eburicol. Eburicol is the substrate of the sterol 14-alpha demethylase encoded by CYP51A, CYP51B and CYP51C, to yield 4,4,24-trimethyl ergosta-8,14,24(28)-trienol. CYP51B encodes the enzyme primarily responsible for sterol 14-alpha-demethylation, and plays an essential role in ascospore formation. CYP51A encodes an additional sterol 14-alpha-demethylase, induced on ergosterol depletion and responsible for the intrinsic variation in azole sensitivity. The third CYP51 isoform, CYP51C, does not encode a sterol 14-alpha-demethylase, but is required for full virulence on host wheat ears. The C-14 reductase ERG24 then reduces the C14=C15 double bond which leads to 4,4-dimethylfecosterol. A sequence of further demethylations at C-4, involving the C-4 demethylation complex containing the C-4 methylsterol oxidases ERG25, the sterol-4-alpha-carboxylate 3-dehydrogenase ERG26 and the 3-keto-steroid reductase ERG27, leads to the production of fecosterol via 4-methylfecosterol. ERG28 has a role as a scaffold to help anchor ERG25, ERG26 and ERG27 to the endoplasmic reticulum. The C-8 sterol isomerase ERG2 then catalyzes the reaction which results in unsaturation at C-7 in the B ring of sterols and thus converts fecosterol to episterol. The sterol-C5-desaturases ERG3A and ERG3BB then catalyze the introduction of a C-5 double bond in the B ring to produce 5-dehydroepisterol. The C-22 sterol desaturases ERG5A and ERG5B further convert 5-dehydroepisterol into ergosta-5,7,22,24(28)-tetraen-3beta-ol by forming the C-22(23) double bond in the sterol side chain. Finally, ergosta-5,7,22,24(28)-tetraen-3beta-ol is substrate of the C-24(28) sterol reductase ERG4 to produce ergosterol. The protein is Delta(7)-sterol 5(6)-desaturase ERG3B of Gibberella zeae (strain ATCC MYA-4620 / CBS 123657 / FGSC 9075 / NRRL 31084 / PH-1) (Wheat head blight fungus).